The primary structure comprises 336 residues: Ornithine carbamoyltransferase, catabolic (336 aa).

Residues Ser57–Thr60, Gln84, Arg108, and His135–Gln138 contribute to the carbamoyl phosphate site. L-ornithine is bound by residues Asn168, Asp232, and Ser236–Met237. Carbamoyl phosphate-binding positions include Cys274–Leu275 and Arg321.

This sequence belongs to the aspartate/ornithine carbamoyltransferase superfamily. OTCase family. Nonameric or dodecamer (tetramer of trimers).

It is found in the cytoplasm. The enzyme catalyses carbamoyl phosphate + L-ornithine = L-citrulline + phosphate + H(+). Its pathway is amino-acid degradation; L-arginine degradation via ADI pathway; carbamoyl phosphate from L-arginine: step 2/2. Inhibited by 2-aminopentanoic acid (norvaline). Activated by phosphate and nucleoside monophosphates such as AMP, GMP, CMP, UMP. Allosterically inhibited by the polyamines such as spermidine and putrescine. Functionally, involved in the catabolism of arginine. Catalyzes the phosphorolysis of citrulline, the reverse reaction of the biosynthetic one, yielding ornithine and carbamoyl phosphate which serve to generate ATP from ADP. This catabolic OTCase does not carry out the biosynthetic reaction because of a poor affinity and a marked cooperativity for carbamoyl phosphate. The protein is Ornithine carbamoyltransferase, catabolic of Pseudomonas aeruginosa (strain ATCC 15692 / DSM 22644 / CIP 104116 / JCM 14847 / LMG 12228 / 1C / PRS 101 / PAO1).